Consider the following 261-residue polypeptide: Acetylglutamate kinase (261 aa).

Substrate-binding positions include 46–47 (GG), R68, and N160.

It belongs to the acetylglutamate kinase family. ArgB subfamily.

The protein localises to the cytoplasm. It carries out the reaction N-acetyl-L-glutamate + ATP = N-acetyl-L-glutamyl 5-phosphate + ADP. It participates in amino-acid biosynthesis; L-arginine biosynthesis; N(2)-acetyl-L-ornithine from L-glutamate: step 2/4. Its function is as follows. Catalyzes the ATP-dependent phosphorylation of N-acetyl-L-glutamate. The sequence is that of Acetylglutamate kinase from Shewanella loihica (strain ATCC BAA-1088 / PV-4).